Here is a 192-residue protein sequence, read N- to C-terminus: Orotate phosphoribosyltransferase (192 aa).

A 5-phospho-alpha-D-ribose 1-diphosphate-binding site is contributed by 116 to 124 (EDIVTTGLS). Positions 120 and 148 each coordinate orotate.

It belongs to the purine/pyrimidine phosphoribosyltransferase family. PyrE subfamily. In terms of assembly, homodimer. The cofactor is Mg(2+).

It catalyses the reaction orotidine 5'-phosphate + diphosphate = orotate + 5-phospho-alpha-D-ribose 1-diphosphate. Its pathway is pyrimidine metabolism; UMP biosynthesis via de novo pathway; UMP from orotate: step 1/2. Catalyzes the transfer of a ribosyl phosphate group from 5-phosphoribose 1-diphosphate to orotate, leading to the formation of orotidine monophosphate (OMP). The polypeptide is Orotate phosphoribosyltransferase (Bartonella quintana (strain Toulouse) (Rochalimaea quintana)).